A 971-amino-acid polypeptide reads, in one-letter code: Kinesin-like protein KIN-14C (971 aa).

Positions 14 to 119 (ANRRAEVIDW…CLLALKDNVA (106 aa)) constitute a Calponin-homology (CH) domain. Positions 272 to 357 (IKALETLVNG…QMETKARQME (86 aa)) form a coiled coil. Positions 472 to 799 (NIRVYCRVRP…LKFAERVSGV (328 aa)) constitute a Kinesin motor domain. Residue 556 to 563 (GQTGSGKT) participates in ATP binding. Residues 809–844 (EGKDIKELLEQVASLKDTIARKDMEIEQLQLLKSKS) are a coiled coil. The span at 839–881 (LLKSKSPNSMTDRNGSNLLRQSTSSTGLSSLPVASQQNQQLSG) shows a compositional bias: polar residues. The segment at 839-971 (LLKSKSPNSM…GSLAKPSKRR (133 aa)) is disordered.

Belongs to the TRAFAC class myosin-kinesin ATPase superfamily. Kinesin family. KIN-14 subfamily.

The protein is Kinesin-like protein KIN-14C of Oryza sativa subsp. japonica (Rice).